The primary structure comprises 237 residues: Ras-related protein Rab-23 (237 aa).

Residue alanine 19 participates in GDP binding. GTP-binding residues include valine 20, glycine 21, lysine 22, serine 23, and serine 24. Positions 21, 22, 23, 24, and 37 each coordinate GDP. Position 23 (serine 23) interacts with Mg(2+). Residues 28-46 (RYCKGIFTKDYKKTIGVDF) carry the Switch 1 motif. A GTP-binding site is contributed by tyrosine 38. A GDP-binding site is contributed by lysine 40. A GTP-binding site is contributed by threonine 41. Mg(2+) is bound by residues threonine 41 and aspartate 64. Positions 65–84 (TAGQEEFDAITKAYYRGAQA) match the Switch 2 motif. GTP is bound by residues glycine 67, asparagine 121, lysine 122, aspartate 124, serine 151, valine 152, and lysine 153. Positions 121, 122, and 124 each coordinate GDP. GDP-binding residues include valine 152 and lysine 153. A phosphoserine mark is found at serine 186 and serine 187. The tract at residues 204-237 (QNSSSLNGGDVINLRPNKQRTKRTRNPFSSCSVP) is disordered. At cysteine 234 the chain carries Cysteine methyl ester. A lipid anchor (S-geranylgeranyl cysteine) is attached at cysteine 234. A propeptide spans 235–237 (SVP) (removed in mature form).

It belongs to the small GTPase superfamily. Rab family. As to quaternary structure, interacts with SUFU. Mg(2+) serves as cofactor. As to expression, detected in brain neurons (at protein level). Forebrain and midbrain.

Its subcellular location is the cell membrane. It is found in the cytoplasm. The protein localises to the endosome membrane. It localises to the cytoplasmic vesicle. The protein resides in the autophagosome. Its subcellular location is the phagosome. It is found in the phagosome membrane. The catalysed reaction is GTP + H2O = GDP + phosphate + H(+). Its activity is regulated as follows. Regulated by guanine nucleotide exchange factors (GEFs) which promote the exchange of bound GDP for free GTP. Regulated by GTPase activating proteins (GAPs) which increase the GTP hydrolysis activity. Inhibited by GDP dissociation inhibitors (GDIs). Functionally, the small GTPases Rab are key regulators of intracellular membrane trafficking, from the formation of transport vesicles to their fusion with membranes. Rabs cycle between an inactive GDP-bound form and an active GTP-bound form that is able to recruit to membranes different set of downstream effectors directly responsible for vesicle formation, movement, tethering and fusion. Plays a role in autophagic vacuole assembly, and mediates defense against pathogens, such as S.aureus, by promoting their capture by autophagosomes that then merge with lysosomes. Together with SUFU, prevents nuclear import of GLI1, and thereby inhibits GLI1 transcription factor activity. Regulates GLI1 in differentiating chondrocytes. Likewise, regulates GLI3 proteolytic processing and modulates GLI2 and GLI3 transcription factor activity. This chain is Ras-related protein Rab-23, found in Mus musculus (Mouse).